The chain runs to 184 residues: Fe/S biogenesis protein NfuA (184 aa).

Residues Cys-142 and Cys-145 each contribute to the [4Fe-4S] cluster site.

The protein belongs to the NfuA family. In terms of assembly, homodimer. The cofactor is [4Fe-4S] cluster.

In terms of biological role, involved in iron-sulfur cluster biogenesis. Binds a 4Fe-4S cluster, can transfer this cluster to apoproteins, and thereby intervenes in the maturation of Fe/S proteins. Could also act as a scaffold/chaperone for damaged Fe/S proteins. This Wigglesworthia glossinidia brevipalpis protein is Fe/S biogenesis protein NfuA.